The chain runs to 292 residues: Phosphoribosylaminoimidazole-succinocarboxamide synthase (292 aa).

It belongs to the SAICAR synthetase family.

It catalyses the reaction 5-amino-1-(5-phospho-D-ribosyl)imidazole-4-carboxylate + L-aspartate + ATP = (2S)-2-[5-amino-1-(5-phospho-beta-D-ribosyl)imidazole-4-carboxamido]succinate + ADP + phosphate + 2 H(+). The protein operates within purine metabolism; IMP biosynthesis via de novo pathway; 5-amino-1-(5-phospho-D-ribosyl)imidazole-4-carboxamide from 5-amino-1-(5-phospho-D-ribosyl)imidazole-4-carboxylate: step 1/2. The polypeptide is Phosphoribosylaminoimidazole-succinocarboxamide synthase (Thermodesulfovibrio yellowstonii (strain ATCC 51303 / DSM 11347 / YP87)).